A 498-amino-acid polypeptide reads, in one-letter code: ATP synthase subunit beta, chloroplastic (498 aa).

Residue 172–179 (GGAGVGKT) participates in ATP binding.

The protein belongs to the ATPase alpha/beta chains family. F-type ATPases have 2 components, CF(1) - the catalytic core - and CF(0) - the membrane proton channel. CF(1) has five subunits: alpha(3), beta(3), gamma(1), delta(1), epsilon(1). CF(0) has four main subunits: a(1), b(1), b'(1) and c(9-12).

The protein localises to the plastid. It localises to the chloroplast thylakoid membrane. It catalyses the reaction ATP + H2O + 4 H(+)(in) = ADP + phosphate + 5 H(+)(out). Its function is as follows. Produces ATP from ADP in the presence of a proton gradient across the membrane. The catalytic sites are hosted primarily by the beta subunits. This is ATP synthase subunit beta, chloroplastic from Myristica fragrans (Nutmeg).